Reading from the N-terminus, the 469-residue chain is ATP synthase subunit beta (469 aa).

156 to 163 (GGAGVGKT) is an ATP binding site.

Belongs to the ATPase alpha/beta chains family. In terms of assembly, F-type ATPases have 2 components, CF(1) - the catalytic core - and CF(0) - the membrane proton channel. CF(1) has five subunits: alpha(3), beta(3), gamma(1), delta(1), epsilon(1). CF(0) has three main subunits: a(1), b(2) and c(9-12). The alpha and beta chains form an alternating ring which encloses part of the gamma chain. CF(1) is attached to CF(0) by a central stalk formed by the gamma and epsilon chains, while a peripheral stalk is formed by the delta and b chains.

The protein localises to the cell membrane. It catalyses the reaction ATP + H2O + 4 H(+)(in) = ADP + phosphate + 5 H(+)(out). Functionally, produces ATP from ADP in the presence of a proton gradient across the membrane. The catalytic sites are hosted primarily by the beta subunits. This Bacillus mycoides (strain KBAB4) (Bacillus weihenstephanensis) protein is ATP synthase subunit beta.